The following is a 261-amino-acid chain: Ribonuclease PH (261 aa).

Residues Arg-88 and 126–128 each bind phosphate; that span reads GTR. The tract at residues 242 to 261 is disordered; it reads PYPGVLPEPKNPEPKKKFGA. The segment covering 251–261 has biased composition (basic and acidic residues); that stretch reads KNPEPKKKFGA.

Belongs to the RNase PH family. In terms of assembly, homohexameric ring arranged as a trimer of dimers.

It catalyses the reaction tRNA(n+1) + phosphate = tRNA(n) + a ribonucleoside 5'-diphosphate. Functionally, phosphorolytic 3'-5' exoribonuclease that plays an important role in tRNA 3'-end maturation. Removes nucleotide residues following the 3'-CCA terminus of tRNAs; can also add nucleotides to the ends of RNA molecules by using nucleoside diphosphates as substrates, but this may not be physiologically important. Probably plays a role in initiation of 16S rRNA degradation (leading to ribosome degradation) during starvation. This is Ribonuclease PH from Rhodococcus erythropolis (strain PR4 / NBRC 100887).